An 857-amino-acid chain; its full sequence is Dimethylglycine dehydrogenase, mitochondrial (857 aa).

The N-terminal 43 residues, 1–43, are a transit peptide targeting the mitochondrion; the sequence is MLRLGALRLRGLALRSSQGRPSSAGLREGQESPPSPPEWKDRA. The disordered stretch occupies residues 15-39; the sequence is RSSQGRPSSAGLREGQESPPSPPEW. FAD is bound by residues 52–53, 73–74, and 80–88; these read CV, EK, and GSTWHAAGL. Histidine 84 is modified (tele-8alpha-FAD histidine). Lysine 107 carries the post-translational modification N6-acetyllysine. Position 141 is an N6-acetyllysine; alternate (lysine 141). Lysine 141 carries the N6-succinyllysine; alternate modification. Lysine 161 carries the post-translational modification N6-acetyllysine. An FAD-binding site is contributed by valine 212. N6-acetyllysine is present on lysine 216. FAD is bound at residue tryptophan 244. N6-succinyllysine occurs at positions 310 and 312. 2 positions are modified to N6-acetyllysine: lysine 328 and lysine 353. 390 to 395 is an FAD binding site; sequence FGYGII. 3 positions are modified to N6-acetyllysine; alternate: lysine 427, lysine 469, and lysine 516. An N6-succinyllysine; alternate mark is found at lysine 427, lysine 469, and lysine 516. 573–575 provides a ligand contact to (6S)-5,6,7,8-tetrahydrofolate; sequence ELT. An N6-acetyllysine; alternate modification is found at lysine 648. Lysine 648 bears the N6-succinyllysine; alternate mark. (6S)-5,6,7,8-tetrahydrofolate contacts are provided by residues tyrosine 669, 676–678, and tyrosine 737; that span reads ELY. Position 757 is an N6-acetyllysine (lysine 757). The residue at position 786 (lysine 786) is an N6-acetyllysine; alternate. An N6-succinyllysine; alternate modification is found at lysine 786. At lysine 788 the chain carries N6-succinyllysine.

The protein belongs to the GcvT family. FAD serves as cofactor.

It is found in the mitochondrion. It catalyses the reaction (6S)-5,6,7,8-tetrahydrofolyl-(gamma-L-Glu)(n) + N,N-dimethylglycine + oxidized [electron-transfer flavoprotein] + H(+) = (6R)-5,10-methylenetetrahydrofolyl-(gamma-L-Glu)(n) + sarcosine + reduced [electron-transfer flavoprotein]. It functions in the pathway amine and polyamine degradation; betaine degradation; sarcosine from betaine: step 2/2. Functionally, catalyzes the demethylation of N,N-dimethylglycine to sarcosine. Also has activity with sarcosine in vitro. In Rattus norvegicus (Rat), this protein is Dimethylglycine dehydrogenase, mitochondrial (Dmgdh).